A 650-amino-acid polypeptide reads, in one-letter code: Fructose-1,6-bisphosphatase class 3 (650 aa).

It belongs to the FBPase class 3 family. It depends on Mn(2+) as a cofactor.

The catalysed reaction is beta-D-fructose 1,6-bisphosphate + H2O = beta-D-fructose 6-phosphate + phosphate. It functions in the pathway carbohydrate biosynthesis; gluconeogenesis. This is Fructose-1,6-bisphosphatase class 3 from Staphylococcus xylosus.